The sequence spans 98 residues: NADH-ubiquinone oxidoreductase chain 4L (98 aa).

The next 2 helical transmembrane spans lie at 29–49 (SLLC…LLIL) and 61–81 (ILLL…LVTV).

Belongs to the complex I subunit 4L family. As to quaternary structure, core subunit of respiratory chain NADH dehydrogenase (Complex I) which is composed of 45 different subunits.

The protein localises to the mitochondrion inner membrane. It catalyses the reaction a ubiquinone + NADH + 5 H(+)(in) = a ubiquinol + NAD(+) + 4 H(+)(out). In terms of biological role, core subunit of the mitochondrial membrane respiratory chain NADH dehydrogenase (Complex I) which catalyzes electron transfer from NADH through the respiratory chain, using ubiquinone as an electron acceptor. Part of the enzyme membrane arm which is embedded in the lipid bilayer and involved in proton translocation. The polypeptide is NADH-ubiquinone oxidoreductase chain 4L (MT-ND4L) (Cheirogaleus medius (Fat-tailed dwarf lemur)).